The chain runs to 125 residues: Small ribosomal subunit protein uS13 (125 aa).

Residues 90 to 125 (QRHRKGLPVRGQRTKTNARTRKGPKRTVAGKKKATK) are disordered.

It belongs to the universal ribosomal protein uS13 family. In terms of assembly, part of the 30S ribosomal subunit. Forms a loose heterodimer with protein S19. Forms two bridges to the 50S subunit in the 70S ribosome.

In terms of biological role, located at the top of the head of the 30S subunit, it contacts several helices of the 16S rRNA. In the 70S ribosome it contacts the 23S rRNA (bridge B1a) and protein L5 of the 50S subunit (bridge B1b), connecting the 2 subunits; these bridges are implicated in subunit movement. Contacts the tRNAs in the A and P-sites. This chain is Small ribosomal subunit protein uS13, found in Bifidobacterium longum (strain DJO10A).